The chain runs to 250 residues: Vacuolar iron transporter 1 (250 aa).

Residues 1–37 lie on the Cytoplasmic side of the membrane; that stretch reads MSSEEDKITRISIEPEKQTLLDHHTEKHFTAGEIVRD. A helical membrane pass occupies residues 38 to 58; that stretch reads IIIGVSDGLTVPFALAAGLSG. Topologically, residues 59–64 are vacuolar; the sequence is ANASSS. A helical membrane pass occupies residues 65 to 85; the sequence is IVLTAGIAEVAAGAISMGLGG. Over 86-169 the chain is Cytoplasmic; it reads YLAAKSEEDH…PDPKRALQSA (84 aa). Residues 91 to 166 are cytoplasmic metal binding domain (MBD); sequence SEEDHYAREM…LEKPDPKRAL (76 aa). The Fe cation site is built by glutamate 103, glutamate 106, glutamate 114, glutamate 117, methionine 150, and glutamate 154. Residues 170–190 traverse the membrane as a helical segment; sequence FTIAIAYVLGGFIPLLPYMLI. Over 191 to 192 the chain is Vacuolar; that stretch reads PH. A helical transmembrane segment spans residues 193–213; the sequence is AMDAVVASVVITLFALFIFGY. Topologically, residues 214-227 are cytoplasmic; that stretch reads AKGHFTGSKPLRSA. The helical transmembrane segment at 228–248 threads the bilayer; it reads FETAFIGAIASAAAFCLAKVV. Residues 249–250 lie on the Vacuolar side of the membrane; the sequence is QH.

The protein belongs to the CCC1 family. Homodimer. The dimeric interaction is mediated by both the transmembrane domains (TMDs) and the cytoplasmic metal binding domain (MBD). As to expression, highly expressed in developing embryo and seed. Expressed in young seedlings, predominantly in the vasculature.

Its subcellular location is the vacuole membrane. The catalysed reaction is Fe(2+)(in) = Fe(2+)(out). Functionally, vacuolar iron transporter involved in the transfer of iron ions from the cytosol to the vacuole for intracellular iron storage. Involved in regulation of cellular iron homeostasis. Vacuolar iron storage is required for seed embryo and seedling development. The chain is Vacuolar iron transporter 1 from Arabidopsis thaliana (Mouse-ear cress).